Here is a 277-residue protein sequence, read N- to C-terminus: Prohibitin-3, mitochondrial (277 aa).

At G2 the chain carries N-acetylglycine. Residues 2–6 lie on the Mitochondrial matrix side of the membrane; sequence GSQQA. Residues 7–28 form a helical; Signal-anchor for type II membrane protein membrane-spanning segment; that stretch reads AVSFLSNLAKAAFGLGTAATVL. Topologically, residues 29–277 are mitochondrial intermembrane; the sequence is NTSLFTVDGG…GQSMLFALNR (249 aa).

It belongs to the prohibitin family. In terms of assembly, component of a prohibitin multimeric complex in mitochondrial membranes. As to expression, mostly expressed in proliferative tissues, including vasculature, shoot and root apical tissues. Expressed in roots, stems, leaves and flowers (at protein level).

It localises to the cell membrane. Its subcellular location is the mitochondrion inner membrane. It is found in the nucleus. The protein localises to the cytoplasm. Prohibitin probably acts as a holdase/unfoldase for the stabilization of newly synthesized mitochondrial proteins. Necessary for mitochondrial and cell metabolism and biogenesis. Required to regulate the ethylene-mediated signaling; involved in growth maintenance in the presence of ethylene. Functions in nitric oxide (NO)-mediated responses and in hydrogen peroxide-induced NO accumulation. The protein is Prohibitin-3, mitochondrial (PHB3) of Arabidopsis thaliana (Mouse-ear cress).